Here is a 299-residue protein sequence, read N- to C-terminus: Biphenyl-2,3-diol 1,2-dioxygenase (299 aa).

VOC domains are found at residues Glu-6 to Gly-121 and Gly-146 to Gly-267. Positions 149, 212, and 263 each coordinate Fe cation.

This sequence belongs to the extradiol ring-cleavage dioxygenase family. Homooctamer. Requires Fe(2+) as cofactor.

It carries out the reaction biphenyl-2,3-diol + O2 = 2-hydroxy-6-oxo-6-phenylhexa-2,4-dienoate + H(+). Its pathway is xenobiotic degradation; biphenyl degradation; 2-hydroxy-2,4-pentadienoate and benzoate from biphenyl: step 3/4. The polypeptide is Biphenyl-2,3-diol 1,2-dioxygenase (bphC) (Sphingomonas paucimobilis (Pseudomonas paucimobilis)).